The following is a 236-amino-acid chain: LexA repressor (236 aa).

Positions 26–46 (FDEMKDALDLRSKSGIHRLII) form a DNA-binding region, H-T-H motif. Catalysis depends on for autocatalytic cleavage activity residues S157 and K195.

Belongs to the peptidase S24 family. Homodimer.

The catalysed reaction is Hydrolysis of Ala-|-Gly bond in repressor LexA.. Functionally, represses a number of genes involved in the response to DNA damage (SOS response), including recA and lexA. In the presence of single-stranded DNA, RecA interacts with LexA causing an autocatalytic cleavage which disrupts the DNA-binding part of LexA, leading to derepression of the SOS regulon and eventually DNA repair. In Methylocella silvestris (strain DSM 15510 / CIP 108128 / LMG 27833 / NCIMB 13906 / BL2), this protein is LexA repressor.